The sequence spans 113 residues: U11-theraphotoxin-Hhn1r (113 aa).

The N-terminal stretch at 1–21 is a signal peptide; it reads MNTVRVTFLLVFVLAVSLGQA. Positions 22-74 are excised as a propeptide; sequence DKDENRMEMQEKTEQGKSYLDFAENLLLQKLEELEAKLLEEDSEESRNSRQKR. The disordered stretch occupies residues 61-83; sequence EEDSEESRNSRQKRCIGEGVPCD. 3 cysteine pairs are disulfide-bonded: cysteine 75-cysteine 90, cysteine 82-cysteine 95, and cysteine 89-cysteine 110.

The protein belongs to the neurotoxin 14 (magi-1) family. 01 (HNTX-16) subfamily. Expressed by the venom gland.

It is found in the secreted. Its function is as follows. Probable ion channel inhibitor. This Cyriopagopus hainanus (Chinese bird spider) protein is U11-theraphotoxin-Hhn1r.